We begin with the raw amino-acid sequence, 212 residues long: Ribosomal RNA large subunit methyltransferase E (212 aa).

S-adenosyl-L-methionine-binding residues include glycine 57, tryptophan 59, aspartate 77, aspartate 93, and aspartate 122. Lysine 162 functions as the Proton acceptor in the catalytic mechanism.

Belongs to the class I-like SAM-binding methyltransferase superfamily. RNA methyltransferase RlmE family.

The protein localises to the cytoplasm. The enzyme catalyses uridine(2552) in 23S rRNA + S-adenosyl-L-methionine = 2'-O-methyluridine(2552) in 23S rRNA + S-adenosyl-L-homocysteine + H(+). In terms of biological role, specifically methylates the uridine in position 2552 of 23S rRNA at the 2'-O position of the ribose in the fully assembled 50S ribosomal subunit. This is Ribosomal RNA large subunit methyltransferase E from Coxiella burnetii (strain RSA 331 / Henzerling II).